A 127-amino-acid polypeptide reads, in one-letter code: Small ribosomal subunit protein uS12 (127 aa).

The residue at position 89 (D89) is a 3-methylthioaspartic acid.

The protein belongs to the universal ribosomal protein uS12 family. In terms of assembly, part of the 30S ribosomal subunit. Contacts proteins S8 and S17. May interact with IF1 in the 30S initiation complex.

With S4 and S5 plays an important role in translational accuracy. Its function is as follows. Interacts with and stabilizes bases of the 16S rRNA that are involved in tRNA selection in the A site and with the mRNA backbone. Located at the interface of the 30S and 50S subunits, it traverses the body of the 30S subunit contacting proteins on the other side and probably holding the rRNA structure together. The combined cluster of proteins S8, S12 and S17 appears to hold together the shoulder and platform of the 30S subunit. The protein is Small ribosomal subunit protein uS12 of Campylobacter fetus subsp. fetus (strain 82-40).